We begin with the raw amino-acid sequence, 450 residues long: Glucose-6-phosphate isomerase (450 aa).

At threonine 38 the chain carries Phosphothreonine. Glutamate 290 functions as the Proton donor in the catalytic mechanism. Catalysis depends on residues histidine 311 and lysine 425.

Belongs to the GPI family.

It localises to the cytoplasm. The catalysed reaction is alpha-D-glucose 6-phosphate = beta-D-fructose 6-phosphate. It functions in the pathway carbohydrate biosynthesis; gluconeogenesis. It participates in carbohydrate degradation; glycolysis; D-glyceraldehyde 3-phosphate and glycerone phosphate from D-glucose: step 2/4. Its function is as follows. Catalyzes the reversible isomerization of glucose-6-phosphate to fructose-6-phosphate. The polypeptide is Glucose-6-phosphate isomerase (Bacillus licheniformis (strain ATCC 14580 / DSM 13 / JCM 2505 / CCUG 7422 / NBRC 12200 / NCIMB 9375 / NCTC 10341 / NRRL NRS-1264 / Gibson 46)).